The primary structure comprises 370 residues: Queuine tRNA-ribosyltransferase (370 aa).

Residue aspartate 89 is the Proton acceptor of the active site. Residues 89–93 (DSGGF), aspartate 143, glutamine 187, and glycine 214 each bind substrate. The RNA binding stretch occupies residues 245 to 251 (GVGTPED). Aspartate 264 acts as the Nucleophile in catalysis. The tract at residues 269–273 (TRNAR) is RNA binding; important for wobble base 34 recognition. 4 residues coordinate Zn(2+): cysteine 302, cysteine 304, cysteine 307, and histidine 333.

This sequence belongs to the queuine tRNA-ribosyltransferase family. In terms of assembly, homodimer. Within each dimer, one monomer is responsible for RNA recognition and catalysis, while the other monomer binds to the replacement base PreQ1. Zn(2+) is required as a cofactor.

It catalyses the reaction 7-aminomethyl-7-carbaguanine + guanosine(34) in tRNA = 7-aminomethyl-7-carbaguanosine(34) in tRNA + guanine. It functions in the pathway tRNA modification; tRNA-queuosine biosynthesis. Functionally, catalyzes the base-exchange of a guanine (G) residue with the queuine precursor 7-aminomethyl-7-deazaguanine (PreQ1) at position 34 (anticodon wobble position) in tRNAs with GU(N) anticodons (tRNA-Asp, -Asn, -His and -Tyr). Catalysis occurs through a double-displacement mechanism. The nucleophile active site attacks the C1' of nucleotide 34 to detach the guanine base from the RNA, forming a covalent enzyme-RNA intermediate. The proton acceptor active site deprotonates the incoming PreQ1, allowing a nucleophilic attack on the C1' of the ribose to form the product. After dissociation, two additional enzymatic reactions on the tRNA convert PreQ1 to queuine (Q), resulting in the hypermodified nucleoside queuosine (7-(((4,5-cis-dihydroxy-2-cyclopenten-1-yl)amino)methyl)-7-deazaguanosine). The sequence is that of Queuine tRNA-ribosyltransferase from Azoarcus sp. (strain BH72).